The primary structure comprises 308 residues: tRNA pseudouridine synthase B (308 aa).

Catalysis depends on D47, which acts as the Nucleophile.

It belongs to the pseudouridine synthase TruB family. Type 1 subfamily.

The enzyme catalyses uridine(55) in tRNA = pseudouridine(55) in tRNA. In terms of biological role, responsible for synthesis of pseudouridine from uracil-55 in the psi GC loop of transfer RNAs. The sequence is that of tRNA pseudouridine synthase B from Xanthomonas axonopodis pv. citri (strain 306).